Consider the following 229-residue polypeptide: Large ribosomal subunit protein uL1 (229 aa).

It belongs to the universal ribosomal protein uL1 family. In terms of assembly, part of the 50S ribosomal subunit.

In terms of biological role, binds directly to 23S rRNA. The L1 stalk is quite mobile in the ribosome, and is involved in E site tRNA release. Functionally, protein L1 is also a translational repressor protein, it controls the translation of the L11 operon by binding to its mRNA. The protein is Large ribosomal subunit protein uL1 of Desulforamulus reducens (strain ATCC BAA-1160 / DSM 100696 / MI-1) (Desulfotomaculum reducens).